The primary structure comprises 340 residues: ATP-dependent 6-phosphofructokinase (340 aa).

Position 11 (glycine 11) interacts with ATP. 21 to 25 (RAVVR) is an ADP binding site. ATP contacts are provided by residues 72–73 (RY) and 102–105 (GDGS). A Mg(2+)-binding site is contributed by aspartate 103. 125-127 (TID) is a substrate binding site. The active-site Proton acceptor is aspartate 127. Residue arginine 154 participates in ADP binding. Substrate is bound by residues arginine 162 and 169 to 171 (MGR). Residues 185 to 187 (GAD), lysine 211, and 213 to 215 (KNH) contribute to the ADP site. Substrate-binding positions include glutamate 222, arginine 244, and 250-253 (HIQR).

The protein belongs to the phosphofructokinase type A (PFKA) family. ATP-dependent PFK group I subfamily. Prokaryotic clade 'B1' sub-subfamily. As to quaternary structure, homotetramer. It depends on Mg(2+) as a cofactor.

It is found in the cytoplasm. The enzyme catalyses beta-D-fructose 6-phosphate + ATP = beta-D-fructose 1,6-bisphosphate + ADP + H(+). It functions in the pathway carbohydrate degradation; glycolysis; D-glyceraldehyde 3-phosphate and glycerone phosphate from D-glucose: step 3/4. With respect to regulation, allosterically activated by ADP and other diphosphonucleosides, and allosterically inhibited by phosphoenolpyruvate. Its function is as follows. Catalyzes the phosphorylation of D-fructose 6-phosphate to fructose 1,6-bisphosphate by ATP, the first committing step of glycolysis. This chain is ATP-dependent 6-phosphofructokinase, found in Lactococcus lactis subsp. lactis (Streptococcus lactis).